The sequence spans 100 residues: Apolipoprotein C-II (100 aa).

An N-terminal signal peptide occupies residues 1–22 (MDSRFLLALFLVLLVLGCEVQA). Residues 66-74 (SVDEKLRDM) form a lipid binding region. Positions 78-100 (SSAAMTTYAIIFTDQILTLLKGE) are lipoprotein lipase cofactor.

This sequence belongs to the apolipoprotein C2 family. Post-translationally, proapolipoprotein C-II is synthesized as a sialic acid containing glycoprotein which is subsequently desialylated prior to its proteolytic processing. Proapolipoprotein C-II, the major form found in plasma undergoes proteolytic cleavage of its N-terminal hexapeptide to generate the mature form apolipoprotein C-II, which occurs as the minor form in plasma.

It localises to the secreted. In terms of biological role, component of chylomicrons, very low-density lipoproteins (VLDL), low-density lipoproteins (LDL), and high-density lipoproteins (HDL) in plasma. Plays an important role in lipoprotein metabolism as an activator of lipoprotein lipase. This is Apolipoprotein C-II (APOC2) from Myodes glareolus (Bank vole).